Consider the following 479-residue polypeptide: Calcium uniporter protein, mitochondrial (479 aa).

Residues 1–54 (MNHALRRATLGLSPGLRASRLQQSFAKHQIPAVYRCEAASTPLQRAFTTSRCFR) constitute a mitochondrion transit peptide. The Mitochondrial matrix segment spans residues 55–323 (QETAAESEKD…DTLAHQGAHR (269 aa)). Disordered stretches follow at residues 56 to 125 (ETAA…KGRL) and 206 to 238 (EADQ…HEGP). Residues 59–79 (AESEKDDAARREEQSERARKR) are a coiled coil. The span at 60–75 (ESEKDDAARREEQSER) shows a compositional bias: basic and acidic residues. The segment covering 83–93 (NVTSGSSAQTL) has biased composition (polar residues). Composition is skewed to basic and acidic residues over residues 94 to 122 (ENDR…DMKK) and 206 to 224 (EADQ…KKDN). A helical transmembrane segment spans residues 324-344 (LAQGGFAALAGWWGVVYYVTF). Over 345-354 (HTQAGWDLVE) the chain is Mitochondrial intermembrane. The Selectivity filter motif lies at 350 to 358 (WDLVEPVTY). Position 354 (glutamate 354) interacts with Ca(2+). The helical transmembrane segment at 355-375 (PVTYLAGLTTVMGAYLWFLYI) threads the bilayer. Residues 376–479 (SRDLSYKAAM…GSSDKIKKKQ (104 aa)) are Mitochondrial matrix-facing. The segment covering 445–462 (KVLEEEKQGRDGTKVTEG) has biased composition (basic and acidic residues). Residues 445–479 (KVLEEEKQGRDGTKVTEGKDEDDGPGSSDKIKKKQ) form a disordered region.

It belongs to the MCU (TC 1.A.77) family. Homotetramer, assembles in a dimer or dimers configuration with two interfaces.

It is found in the mitochondrion inner membrane. The enzyme catalyses Ca(2+)(in) = Ca(2+)(out). Its function is as follows. Highly selective calcium channel localized to the inner mitochondrial membrane, which mediates calcium uptake into the mitochondrial matrix. Mitochondrial calcium homeostasis plays key roles in cellular physiology and regulates ATP production, cytoplasmic calcium signals and activation of cell death pathways. Sufficient to operate as a pore-forming channel without the need of calcium-sensor or auxiliary subunit. This chain is Calcium uniporter protein, mitochondrial, found in Gibberella zeae (strain ATCC MYA-4620 / CBS 123657 / FGSC 9075 / NRRL 31084 / PH-1) (Wheat head blight fungus).